The primary structure comprises 185 residues: Ribose 1,5-bisphosphate phosphokinase PhnN (185 aa).

This sequence belongs to the ribose 1,5-bisphosphokinase family.

It carries out the reaction alpha-D-ribose 1,5-bisphosphate + ATP = 5-phospho-alpha-D-ribose 1-diphosphate + ADP. It participates in metabolic intermediate biosynthesis; 5-phospho-alpha-D-ribose 1-diphosphate biosynthesis; 5-phospho-alpha-D-ribose 1-diphosphate from D-ribose 5-phosphate (route II): step 3/3. In terms of biological role, catalyzes the phosphorylation of ribose 1,5-bisphosphate to 5-phospho-D-ribosyl alpha-1-diphosphate (PRPP). This chain is Ribose 1,5-bisphosphate phosphokinase PhnN, found in Escherichia coli (strain SMS-3-5 / SECEC).